The sequence spans 60 residues: Large ribosomal subunit protein bL32 (60 aa).

Residues 1–20 are compositionally biased toward basic residues; it reads MACPKKKTSKSKRSMRRAAW. Residues 1 to 22 are disordered; sequence MACPKKKTSKSKRSMRRAAWKR.

It belongs to the bacterial ribosomal protein bL32 family.

This chain is Large ribosomal subunit protein bL32, found in Thermosynechococcus vestitus (strain NIES-2133 / IAM M-273 / BP-1).